A 250-amino-acid polypeptide reads, in one-letter code: Keratin-associated protein 9-1 (250 aa).

A run of 32 repeats spans residues 8 to 12, 13 to 17, 18 to 22, 37 to 41, 42 to 46, 51 to 55, 56 to 60, 61 to 65, 66 to 70, 75 to 79, 80 to 84, 85 to 89, 90 to 94, 95 to 99, 105 to 109, 114 to 117, 118 to 121, 133 to 137, 138 to 142, 143 to 147, 153 to 157, 162 to 166, 167 to 171, 176 to 180, 185 to 189, 190 to 194, 214 to 218, 219 to 223, 229 to 233, 234 to 238, 239 to 243, and 244 to 248. Positions 8–248 are 32 X 5 AA repeats of C-C-[CGSVRQH]-[SQTNP]-[PTSI]; the sequence is CCQPTCCRTT…CCVSSCCQPS (241 aa).

It belongs to the KRTAP type 9 family. Interacts with hair keratins.

In the hair cortex, hair keratin intermediate filaments are embedded in an interfilamentous matrix, consisting of hair keratin-associated proteins (KRTAP), which are essential for the formation of a rigid and resistant hair shaft through their extensive disulfide bond cross-linking with abundant cysteine residues of hair keratins. The matrix proteins include the high-sulfur and high-glycine-tyrosine keratins. This chain is Keratin-associated protein 9-1, found in Homo sapiens (Human).